The sequence spans 1122 residues: RecBCD enzyme subunit RecC (1122 aa).

This sequence belongs to the RecC family. Heterotrimer of RecB, RecC and RecD. All subunits contribute to DNA-binding. Interacts with YgbT (Cas1). As to quaternary structure, (Microbial infection) Lambda virus GamS protein interacts with the enzyme without displacing any of the subunits.

After reacting with DNA bearing a Chi site the holoenzyme is disassembled and loses exonuclease activity, DNA unwinding and Chi-directed DNA cleavage; RecB remains complexed with ssDNA, which may prevent holoenzyme reassembly. High levels of Mg(2+) (13 mM MgCl(2+)) or incubation with DNase allow holoenzyme reassembly, suggesting it is DNA bound to RecB that prevents reassembly. With respect to regulation, (Microbial infection) RecBCD is inhibited by the lambda virus gam protein (both GamL and GamS isoforms); in vitro a short preincubation prior to adding DNA results in maximal inhibition. Functionally, a helicase/nuclease that prepares dsDNA breaks (DSB) for recombinational DNA repair. Binds to DSBs and unwinds DNA via a rapid (&gt;1 kb/second) and highly processive (&gt;30 kb) ATP-dependent bidirectional helicase. Unwinds dsDNA until it encounters a Chi (crossover hotspot instigator, 5'-GCTGGTGG-3') sequence from the 3' direction. Cuts ssDNA a few nucleotides 3' to Chi site, by nicking one strand or switching the strand degraded (depending on the reaction conditions). The properties and activities of the enzyme are changed at Chi. The Chi-altered holoenzyme produces a long 3'-ssDNA overhang which facilitates RecA-binding to the ssDNA for homologous DNA recombination and repair. Holoenzyme degrades any linearized DNA that is unable to undergo homologous recombination. In the holoenzyme this subunit almost certainly recognizes the wild-type Chi sequence, when added to isolated RecB increases its ATP-dependent helicase processivity. The RecBC complex requires the RecD subunit for nuclease activity, but can translocate along ssDNA in both directions. The RecBCD complex does not unwind G-quadruplex DNA. This Escherichia coli (strain K12) protein is RecBCD enzyme subunit RecC.